Here is a 115-residue protein sequence, read N- to C-terminus: Ribosome-binding factor A (115 aa).

The protein belongs to the RbfA family. In terms of assembly, monomer. Binds 30S ribosomal subunits, but not 50S ribosomal subunits or 70S ribosomes.

It is found in the cytoplasm. One of several proteins that assist in the late maturation steps of the functional core of the 30S ribosomal subunit. Associates with free 30S ribosomal subunits (but not with 30S subunits that are part of 70S ribosomes or polysomes). Required for efficient processing of 16S rRNA. May interact with the 5'-terminal helix region of 16S rRNA. The protein is Ribosome-binding factor A of Bacillus velezensis (strain DSM 23117 / BGSC 10A6 / LMG 26770 / FZB42) (Bacillus amyloliquefaciens subsp. plantarum).